Consider the following 418-residue polypeptide: Outer membrane protein assembly factor BamB (418 aa).

Residues 1-28 form the signal peptide; that stretch reads MFHNTCGRKGRFARAMGMALAISVTLSG. Cysteine 29 carries N-palmitoyl cysteine lipidation. Cysteine 29 carries the S-diacylglycerol cysteine lipid modification.

The protein belongs to the BamB family. In terms of assembly, part of the Bam complex.

It is found in the cell outer membrane. In terms of biological role, part of the outer membrane protein assembly complex, which is involved in assembly and insertion of beta-barrel proteins into the outer membrane. The sequence is that of Outer membrane protein assembly factor BamB from Alteromonas naphthalenivorans.